Consider the following 475-residue polypeptide: Glycogen synthase (475 aa).

Position 15 (lysine 15) interacts with ADP-alpha-D-glucose.

This sequence belongs to the glycosyltransferase 1 family. Bacterial/plant glycogen synthase subfamily.

The enzyme catalyses [(1-&gt;4)-alpha-D-glucosyl](n) + ADP-alpha-D-glucose = [(1-&gt;4)-alpha-D-glucosyl](n+1) + ADP + H(+). It functions in the pathway glycan biosynthesis; glycogen biosynthesis. In terms of biological role, synthesizes alpha-1,4-glucan chains using ADP-glucose. This chain is Glycogen synthase, found in Anaeromyxobacter sp. (strain K).